Consider the following 188-residue polypeptide: Photosystem I assembly protein Ycf4 (188 aa).

Transmembrane regions (helical) follow at residues 26–46 (YFWA…GLSS) and 70–90 (LLFY…SLLW).

Belongs to the Ycf4 family.

The protein localises to the cellular thylakoid membrane. Seems to be required for the assembly of the photosystem I complex. This chain is Photosystem I assembly protein Ycf4, found in Microcystis aeruginosa (strain NIES-843 / IAM M-2473).